The chain runs to 552 residues: Ferry endosomal RAB5 effector complex subunit 3 (552 aa).

The tract at residues 383-403 is disordered; sequence LKESLDSGNQNGGNDDKTKNA.

Component of the FERRY complex composed of five subunits, TBCK, PPP1R21, FERRY3, CRYZL1 and GATD1 with a ratio of 1:2:1:2:4, respectively.

The protein localises to the cytoplasm. The protein resides in the early endosome. Its function is as follows. Component of the FERRY complex (Five-subunit Endosomal Rab5 and RNA/ribosome intermediary). The FERRY complex directly interacts with mRNAs and RAB5A, and functions as a RAB5A effector involved in the localization and the distribution of specific mRNAs most likely by mediating their endosomal transport. The complex recruits mRNAs and ribosomes to early endosomes through direct mRNA-interaction. Plays a role in mast cell degranulation. This chain is Ferry endosomal RAB5 effector complex subunit 3, found in Homo sapiens (Human).